A 573-amino-acid polypeptide reads, in one-letter code: Transcription factor E3 (573 aa).

S47 carries the post-translational modification Phosphoserine; by MTOR. The segment at 91 to 151 (TLSASSSAEG…SPAPASPAIS (61 aa)) is disordered. Over residues 107-126 (SSSSSSRVLLRQQLMRAQAQ) the composition is skewed to low complexity. The segment covering 127 to 136 (EQERRERREQ) has biased composition (basic and acidic residues). Positions 137-151 (ASSFPSPAPASPAIS) are enriched in low complexity. R186 is subject to Asymmetric dimethylarginine. A disordered region spans residues 209 to 248 (LASQALTPPPGGASVQPLPTPEAAHAPGPTSSAPNSPMAL). The interval 258–269 (EIDDVIDEIISL) is strong transcription activation domain. S319 carries the post-translational modification Phosphoserine; by MTOR. K337 participates in a covalent cross-link: Glycyl lysine isopeptide (Lys-Gly) (interchain with G-Cter in SUMO2). Positions 344–397 (QKKDNHNLIERRRRFNINDRIKELGTLIPKSSDPEMRWNKGTILKASVDYIRKL) constitute a bHLH domain. The Nuclear localization signal motif lies at 354–357 (RRRR). The segment at 407-428 (LESRQRSLEQANRSLQLRIQEL) is leucine-zipper. The interval 531–573 (VGGLSGGTLSPLRAASDPLLSSVSPAVSKASSRRSSFSMEEES) is disordered. Residues 537–573 (GTLSPLRAASDPLLSSVSPAVSKASSRRSSFSMEEES) show a composition bias toward low complexity. 6 positions are modified to phosphoserine: S540, S546, S552, S554, S558, and S566.

The protein belongs to the MiT/TFE family. In terms of assembly, homodimer and heterodimer; with TFEB or MITF. Interacts with RRAGC/RagC GDP-bound and RRAGD/RagD GDP-bound; promoting its recruitment to lysosomal membrane in the presence of nutrients. Phosphorylation ar Ser-47 and Ser-319 by MTOR via non-canonical mTORC1 pathway regulates its stability and subcellular location, respectively. When nutrients are present, phosphorylation by MTOR at Ser-47 promotes ubiquitination by the SCF(BTRC) complex, followed by degradation. When nutrients are present, phosphorylation by MTOR at Ser-319 also promotes association with 14-3-3/YWHA adapters and retention in the cytosol. Phosphorylation at Ser-47 plays a more critical role than phosphorylation at Ser-319 for TFE3 inactivation. Inhibition of mTORC1, starvation and lysosomal disruption, promotes dephosphorylation and transcription factor activity. Post-translationally, ubiquitinated by the SCF(BTRC) and SCF(FBXW11) complexes following phosphorylation at Ser-47 by MTOR, leading to its degradation by the proteasome. In terms of processing, sumoylated; does not affect dimerization with MITF.

It localises to the cytoplasm. The protein resides in the cytosol. The protein localises to the nucleus. It is found in the lysosome membrane. Its function is as follows. Transcription factor that acts as a master regulator of lysosomal biogenesis and immune response. Specifically recognizes and binds E-box sequences (5'-CANNTG-3'); efficient DNA-binding requires dimerization with itself or with another MiT/TFE family member such as TFEB or MITF. Involved in the cellular response to amino acid availability by acting downstream of MTOR: in the presence of nutrients, TFE3 phosphorylation by MTOR promotes its inactivation. Upon starvation or lysosomal stress, inhibition of MTOR induces TFE3 dephosphorylation, resulting in transcription factor activity. Specifically recognizes and binds the CLEAR-box sequence (5'-GTCACGTGAC-3') present in the regulatory region of many lysosomal genes, leading to activate their expression, thereby playing a central role in expression of lysosomal genes. Maintains the pluripotent state of embryonic stem cells by promoting the expression of genes such as ESRRB; mTOR-dependent TFE3 cytosolic retention and inactivation promotes exit from pluripotency. Required to maintain the naive pluripotent state of hematopoietic stem cell; mTOR-dependent cytoplasmic retention of TFE3 promotes the exit of hematopoietic stem cell from pluripotency. TFE3 activity is also involved in the inhibition of neuronal progenitor differentiation. Acts as a positive regulator of browning of adipose tissue by promoting expression of target genes; mTOR-dependent phosphorylation promotes cytoplasmic retention of TFE3 and inhibits browning of adipose tissue. In association with TFEB, activates the expression of CD40L in T-cells, thereby playing a role in T-cell-dependent antibody responses in activated CD4(+) T-cells and thymus-dependent humoral immunity. Specifically recognizes the MUE3 box, a subset of E-boxes, present in the immunoglobulin enhancer. It also binds very well to a USF/MLTF site. May regulate lysosomal positioning in response to nutrient deprivation by promoting the expression of PIP4P1. In Bos taurus (Bovine), this protein is Transcription factor E3.